The primary structure comprises 341 residues: UDP-N-acetylglucosamine--N-acetylmuramyl-(pentapeptide) pyrophosphoryl-undecaprenol N-acetylglucosamine transferase (341 aa).

UDP-N-acetyl-alpha-D-glucosamine contacts are provided by residues 10–12, Asn124, Ser177, and Gln275; that span reads TGG.

This sequence belongs to the glycosyltransferase 28 family. MurG subfamily.

Its subcellular location is the cell inner membrane. It carries out the reaction di-trans,octa-cis-undecaprenyl diphospho-N-acetyl-alpha-D-muramoyl-L-alanyl-D-glutamyl-meso-2,6-diaminopimeloyl-D-alanyl-D-alanine + UDP-N-acetyl-alpha-D-glucosamine = di-trans,octa-cis-undecaprenyl diphospho-[N-acetyl-alpha-D-glucosaminyl-(1-&gt;4)]-N-acetyl-alpha-D-muramoyl-L-alanyl-D-glutamyl-meso-2,6-diaminopimeloyl-D-alanyl-D-alanine + UDP + H(+). It functions in the pathway cell wall biogenesis; peptidoglycan biosynthesis. Cell wall formation. Catalyzes the transfer of a GlcNAc subunit on undecaprenyl-pyrophosphoryl-MurNAc-pentapeptide (lipid intermediate I) to form undecaprenyl-pyrophosphoryl-MurNAc-(pentapeptide)GlcNAc (lipid intermediate II). The chain is UDP-N-acetylglucosamine--N-acetylmuramyl-(pentapeptide) pyrophosphoryl-undecaprenol N-acetylglucosamine transferase from Campylobacter hominis (strain ATCC BAA-381 / DSM 21671 / CCUG 45161 / LMG 19568 / NCTC 13146 / CH001A).